Reading from the N-terminus, the 262-residue chain is Putative outer membrane protein CPn_1034/CP_0818/CPj1034/CpB1074 (262 aa).

The signal sequence occupies residues 1-17; the sequence is MKTWLFFTFLFSCSSFY.

The protein resides in the cell outer membrane. The protein is Putative outer membrane protein CPn_1034/CP_0818/CPj1034/CpB1074 of Chlamydia pneumoniae (Chlamydophila pneumoniae).